The primary structure comprises 666 residues: Transcriptional regulator MIT1 (666 aa).

Positions 90 to 104 are enriched in low complexity; the sequence is GSNANATSSGSTDSA. Disordered regions lie at residues 90-157, 232-254, 314-389, 425-479, and 528-552; these read GSNA…SNRS, VKNN…NSST, PPYI…FHNA, YTTQ…AENV, and AQEN…GTML. Polar residues-rich tracts occupy residues 108 to 121 and 139 to 157; these read DGTS…SSSK and GHSS…SNRS. S152 carries the phosphoserine modification. Over residues 233–254 the composition is skewed to low complexity; sequence KNNSTTTGNGPNNINNKSNSST. Over residues 314–333 the composition is skewed to polar residues; it reads PPYITQSPDNTNATGMNTHV. Positions 334-384 are enriched in low complexity; the sequence is NNNNNNSNNSSNSNNSNNNNNNNNNNNNNNNNNINNINNVNTNAGNGNNPN. The segment covering 436–451 has biased composition (polar residues); that stretch reads ASTNENQGYSTSSTQH. Over residues 460–476 the composition is skewed to low complexity; sequence SQSASAAAGATGTPGTA. Residues 530 to 552 are compositionally biased toward polar residues; it reads ENTTSNTNAEPSGATSTNSGTML.

It belongs to the MIT1/WOR1 family.

It is found in the cytoplasm. It localises to the nucleus. Transcriptional regulator of pseudohyphal growth. This chain is Transcriptional regulator MIT1 (MIT1), found in Saccharomyces cerevisiae (strain ATCC 204508 / S288c) (Baker's yeast).